The sequence spans 964 residues: Phosphoenolpyruvate carboxylase (964 aa).

Ser-11 carries the post-translational modification Phosphoserine. Residues His-172 and Lys-600 contribute to the active site.

The protein belongs to the PEPCase type 1 family. In terms of assembly, homotetramer. Requires Mg(2+) as cofactor.

It localises to the cytoplasm. The enzyme catalyses oxaloacetate + phosphate = phosphoenolpyruvate + hydrogencarbonate. It functions in the pathway photosynthesis; C4 acid pathway. Its activity is regulated as follows. By light-reversible phosphorylation. Its function is as follows. Through the carboxylation of phosphoenolpyruvate (PEP) it forms oxaloacetate, a four-carbon dicarboxylic acid source for the tricarboxylic acid cycle. The polypeptide is Phosphoenolpyruvate carboxylase (PPC) (Nicotiana tabacum (Common tobacco)).